A 418-amino-acid chain; its full sequence is 4-hydroxy-3-methylbut-2-en-1-yl diphosphate synthase (flavodoxin) (418 aa).

[4Fe-4S] cluster-binding residues include Cys-305, Cys-308, Cys-351, and Glu-358.

The protein belongs to the IspG family. [4Fe-4S] cluster serves as cofactor.

The enzyme catalyses (2E)-4-hydroxy-3-methylbut-2-enyl diphosphate + oxidized [flavodoxin] + H2O + 2 H(+) = 2-C-methyl-D-erythritol 2,4-cyclic diphosphate + reduced [flavodoxin]. It participates in isoprenoid biosynthesis; isopentenyl diphosphate biosynthesis via DXP pathway; isopentenyl diphosphate from 1-deoxy-D-xylulose 5-phosphate: step 5/6. Functionally, converts 2C-methyl-D-erythritol 2,4-cyclodiphosphate (ME-2,4cPP) into 1-hydroxy-2-methyl-2-(E)-butenyl 4-diphosphate. The sequence is that of 4-hydroxy-3-methylbut-2-en-1-yl diphosphate synthase (flavodoxin) from Bartonella bacilliformis (strain ATCC 35685 / KC583 / Herrer 020/F12,63).